A 297-amino-acid chain; its full sequence is Lipoyl synthase (297 aa).

7 residues coordinate [4Fe-4S] cluster: cysteine 37, cysteine 42, cysteine 48, cysteine 63, cysteine 67, cysteine 70, and serine 276. Residues 49 to 265 enclose the Radical SAM core domain; that stretch reads WSRKHATVMI…ERIAKTKGFL (217 aa).

It belongs to the radical SAM superfamily. Lipoyl synthase family. Requires [4Fe-4S] cluster as cofactor.

The protein resides in the cytoplasm. It carries out the reaction [[Fe-S] cluster scaffold protein carrying a second [4Fe-4S](2+) cluster] + N(6)-octanoyl-L-lysyl-[protein] + 2 oxidized [2Fe-2S]-[ferredoxin] + 2 S-adenosyl-L-methionine + 4 H(+) = [[Fe-S] cluster scaffold protein] + N(6)-[(R)-dihydrolipoyl]-L-lysyl-[protein] + 4 Fe(3+) + 2 hydrogen sulfide + 2 5'-deoxyadenosine + 2 L-methionine + 2 reduced [2Fe-2S]-[ferredoxin]. It functions in the pathway protein modification; protein lipoylation via endogenous pathway; protein N(6)-(lipoyl)lysine from octanoyl-[acyl-carrier-protein]: step 2/2. Catalyzes the radical-mediated insertion of two sulfur atoms into the C-6 and C-8 positions of the octanoyl moiety bound to the lipoyl domains of lipoate-dependent enzymes, thereby converting the octanoylated domains into lipoylated derivatives. The chain is Lipoyl synthase from Rickettsia typhi (strain ATCC VR-144 / Wilmington).